Here is a 408-residue protein sequence, read N- to C-terminus: Protein BTN1 (408 aa).

A signal peptide spans 1 to 30; sequence MSDKSHQIYCYFWLFGLINNVLYVVILSAA. 7 consecutive transmembrane segments (helical) span residues 42 to 62, 80 to 100, 128 to 148, 150 to 170, 238 to 258, 323 to 343, and 369 to 389; these read LVLL…PFFI, LGMF…ISFA, SGTG…TSIF, VPVK…LFYF, TVYL…LFPI, WFYV…EGFL, and GAVS…GLGL.

Belongs to the battenin family.

It localises to the vacuole membrane. In terms of biological role, plays a role in vacuolar arginine transport. Involved in pH homeostasis. May be involved in ion homeostasis together with IST2. Not necessary for mitochondrial function or ATP synthase degradation. This chain is Protein BTN1 (YHC3), found in Saccharomyces cerevisiae (strain ATCC 204508 / S288c) (Baker's yeast).